Consider the following 264-residue polypeptide: 3-methyl-2-oxobutanoate hydroxymethyltransferase (264 aa).

Residues D45 and D84 each contribute to the Mg(2+) site. 3-methyl-2-oxobutanoate contacts are provided by residues D45–S46, D84, and K112. A Mg(2+)-binding site is contributed by E114. E181 (proton acceptor) is an active-site residue.

It belongs to the PanB family. Homodecamer; pentamer of dimers. Mg(2+) serves as cofactor.

It is found in the cytoplasm. It carries out the reaction 3-methyl-2-oxobutanoate + (6R)-5,10-methylene-5,6,7,8-tetrahydrofolate + H2O = 2-dehydropantoate + (6S)-5,6,7,8-tetrahydrofolate. It functions in the pathway cofactor biosynthesis; (R)-pantothenate biosynthesis; (R)-pantoate from 3-methyl-2-oxobutanoate: step 1/2. Its function is as follows. Catalyzes the reversible reaction in which hydroxymethyl group from 5,10-methylenetetrahydrofolate is transferred onto alpha-ketoisovalerate to form ketopantoate. The polypeptide is 3-methyl-2-oxobutanoate hydroxymethyltransferase (Escherichia coli O127:H6 (strain E2348/69 / EPEC)).